The following is a 352-amino-acid chain: Quinolinate synthase (352 aa).

Residues histidine 48 and serine 69 each contribute to the iminosuccinate site. Cysteine 114 serves as a coordination point for [4Fe-4S] cluster. Iminosuccinate-binding positions include 140–142 (YAN) and serine 157. Cysteine 201 is a binding site for [4Fe-4S] cluster. Iminosuccinate is bound by residues 227-229 (HPE) and threonine 244. Cysteine 298 is a [4Fe-4S] cluster binding site.

It belongs to the quinolinate synthase family. Type 1 subfamily. [4Fe-4S] cluster serves as cofactor.

The protein localises to the cytoplasm. It catalyses the reaction iminosuccinate + dihydroxyacetone phosphate = quinolinate + phosphate + 2 H2O + H(+). It participates in cofactor biosynthesis; NAD(+) biosynthesis; quinolinate from iminoaspartate: step 1/1. Catalyzes the condensation of iminoaspartate with dihydroxyacetone phosphate to form quinolinate. In Pseudomonas syringae pv. syringae (strain B728a), this protein is Quinolinate synthase.